Here is a 91-residue protein sequence, read N- to C-terminus: Acylphosphatase (91 aa).

Positions 6 to 91 (CMRCYISGRV…WEDYITFDVL (86 aa)) constitute an Acylphosphatase-like domain. Residues Arg21 and Asn39 contribute to the active site.

It belongs to the acylphosphatase family.

It catalyses the reaction an acyl phosphate + H2O = a carboxylate + phosphate + H(+). This Legionella pneumophila (strain Lens) protein is Acylphosphatase (acyP).